We begin with the raw amino-acid sequence, 1254 residues long: Structural polyprotein (1254 aa).

The tract at residues 43-77 is host transcription inhibition; it reads LQAQQMQQLISAVSALTTKQNVKAPKGQRKQKQQK. A disordered region spans residues 60–112; it reads TKQNVKAPKGQRKQKQQKPKEKKEKQKKKPTXKKKQQQKPKPQAKKKKPGRRE. The short motif at 70-108 is the Nuclear localization signal element; the sequence is QRKQKQQKPKEKKEKQKKKPTXKKKQQQKPKPQAKKKKP. Residues 84–110 are compositionally biased toward basic residues; sequence KQKKKPTXKKKQQQKPKPQAKKKKPGR. The binding to the viral RNA stretch occupies residues 95–123; the sequence is QQQKPKPQAKKKKPGRRERMCMKIENDCI. A ribosome-binding region spans residues 108-122; that stretch reads PGRRERMCMKIENDC. A disulfide bridge links Cys-122 with Cys-137. The Peptidase S3 domain occupies 122-270; the sequence is CIFEVKLDGK…RVTPEGTEEW (149 aa). Residue His-148 is the Charge relay system of the active site. The Nuclear export signal signature appears at 153-163; the sequence is IDNPDLAKLTY. An interaction with spike glycoprotein E2 region spans residues 164–169; it reads KKSSKY. Residue Asp-170 is the Charge relay system of the active site. The tract at residues 192 to 202 is dimerization of the capsid protein; that stretch reads PEGHYNWHHGA. Catalysis depends on Ser-222, which acts as the Charge relay system. The segment at 228 to 232 is dimerization of the capsid protein; it reads DNKGR. Residues 270 to 694 are Extracellular-facing; sequence WSAALMMCIL…PHEIIQYYYG (425 aa). Residues 271–282 form a functions as an uncleaved signal peptide for the precursor of protein E3/E2 region; sequence SAALMMCILANT. 3 disulfide bridges follow: Cys-277-Cys-286, Cys-291-Cys-295, and Cys-294-Cys-326. Residue Asn-281 is glycosylated (N-linked (GlcNAc...) asparagine; by host). A glycan (N-linked (GlcNAc...) asparagine; by host) is linked at Asn-328. Intrachain disulfides connect Cys-353–Cys-459, Cys-356–Cys-362, Cys-425–Cys-439, Cys-487–Cys-599, Cys-535–Cys-559, and Cys-537–Cys-554. 2 interaction with host Mxra8 receptor regions span residues 360-363 and 396-398; these read YFCY and HAH. Residues 518-521 are interaction with host Mxra8 receptor; it reads TAGN. An N-linked (GlcNAc...) asparagine; by host glycan is attached at Asn-534. Residues 550–556 are interaction with host Mxra8 receptor; sequence TINTCKI. Asn-596 is a glycosylation site (N-linked (GlcNAc...) asparagine; by host). The helical transmembrane segment at 695-715 threads the bilayer; sequence LYPAATIAAVSGASLMALLTL. Over 716–756 the chain is Cytoplasmic; the sequence is AATCCMLATARRKCLTPYALTPGAVVPLTLGLLXCAPRANA. Cys-719 carries the S-palmitoyl cysteine; by host lipid modification. An interaction with the capsid protein region spans residues 724–728; sequence TARRK. Residues Cys-729 and Cys-750 are each lipidated (S-palmitoyl cysteine; by host). Residues 729–749 are transient transmembrane before p62-6K protein processing; that stretch reads CLTPYALTPGAVVPLTLGLLX. A disulfide bond links Cys-729 and Cys-750. The Extracellular portion of the chain corresponds to 757–771; that stretch reads ASFAETMAYLWDENK. The chain crosses the membrane as a helical span at residues 772-792; it reads TLFWMEXXXXXXALALLACCI. A topological domain (cytoplasmic) is located at residue Lys-793. A helical transmembrane segment spans residues 794–814; sequence SLICCCKPFSFLVLLSLGASA. Residues 815 to 1231 are Extracellular-facing; that stretch reads KAYEHTATIP…AMTWVQRMAS (417 aa). 4 disulfide bridges follow: Cys-865–Cys-930, Cys-878–Cys-910, Cys-879–Cys-912, and Cys-884–Cys-894. The tract at residues 900–917 is E1 fusion peptide loop; the sequence is VYPFMWGGAYCFCDSENT. Asn-957 is a glycosylation site (N-linked (GlcNAc...) asparagine; by host). 4 disulfides stabilise this stretch: Cys-1075-Cys-1087, Cys-1117-Cys-1192, Cys-1122-Cys-1196, and Cys-1144-Cys-1186. The helical transmembrane segment at 1232-1252 threads the bilayer; sequence GLGGLALIAVVVLVLVTCITM. The S-palmitoyl cysteine; by host moiety is linked to residue Cys-1249. A lipid anchor (S-stearoyl cysteine; by host) is attached at Cys-1249. Residues 1253 to 1254 lie on the Cytoplasmic side of the membrane; that stretch reads RR.

Homodimer. Homomultimer. Interacts with host karyopherin KPNA4; this interaction allows the nuclear import of the viral capsid protein. Interacts with spike glycoprotein E2. Interacts with host IRAK1; the interaction leads to inhibition of IRAK1-dependent signaling. In terms of assembly, the precursor of protein E3/E2 and E1 form a heterodimer shortly after synthesis. As to quaternary structure, the precursor of protein E3/E2 and E1 form a heterodimer shortly after synthesis. Processing of the precursor of protein E3/E2 into E2 and E3 results in a heterodimer of the spike glycoproteins E2 and E1. Spike at virion surface are constituted of a trimer of E2-E1 heterodimers. After target cell attachment and endocytosis, E1 change conformation to form homotrimers. Interacts with 6K protein. Interacts with spike glycoprotein E1. Processing of the precursor of protein E3/E2 into E2 and E3 results in a heterodimer of the spike glycoproteins E2 and E1. Spike at virion surface are constituted of a trimer of E2-E1 heterodimers. Interacts with 6K protein. Interacts with host MXRA8; this interaction mediates virus entry. Post-translationally, structural polyprotein: Specific enzymatic cleavages in vivo yield mature proteins. Capsid protein is auto-cleaved during polyprotein translation, unmasking a signal peptide at the N-terminus of the precursor of E3/E2. The remaining polyprotein is then targeted to the host endoplasmic reticulum, where host signal peptidase cleaves it into pE2, 6K and E1 proteins. pE2 is further processed to mature E3 and E2 by host furin in trans-Golgi vesicle. Palmitoylated via thioester bonds. These palmitoylations may induce disruption of the C-terminus transmembrane. This would result in the reorientation of E2 C-terminus from lumenal to cytoplasmic side. In terms of processing, N-glycosylated. Post-translationally, palmitoylated via thioester bonds.

It is found in the virion. Its subcellular location is the host cytoplasm. The protein resides in the host cell membrane. The protein localises to the host nucleus. It localises to the virion membrane. It is found in the host Golgi apparatus. Its subcellular location is the host trans-Golgi network. The protein resides in the host endoplasmic reticulum. It catalyses the reaction Autocatalytic release of the core protein from the N-terminus of the togavirus structural polyprotein by hydrolysis of a -Trp-|-Ser- bond.. In terms of biological role, forms an icosahedral capsid with a T=4 symmetry composed of 240 copies of the capsid protein surrounded by a lipid membrane through which penetrate 80 spikes composed of trimers of E1-E2 heterodimers. The capsid protein binds to the viral RNA genome at a site adjacent to a ribosome binding site for viral genome translation following genome release. Possesses a protease activity that results in its autocatalytic cleavage from the nascent structural protein. Following its self-cleavage, the capsid protein transiently associates with ribosomes, and within several minutes the protein binds to viral RNA and rapidly assembles into icosahedric core particles. The resulting nucleocapsid eventually associates with the cytoplasmic domain of the spike glycoprotein E2 at the cell membrane, leading to budding and formation of mature virions. In case of infection, new virions attach to target cells and after clathrin-mediated endocytosis their membrane fuses with the host endosomal membrane. This leads to the release of the nucleocapsid into the cytoplasm, followed by an uncoating event necessary for the genomic RNA to become accessible. The uncoating might be triggered by the interaction of capsid proteins with ribosomes. Binding of ribosomes would release the genomic RNA since the same region is genomic RNA-binding and ribosome-binding. Specifically inhibits interleukin-1 receptor-associated kinase 1/IRAK1-dependent signaling during viral entry, representing a means by which the alphaviruses may evade innate immune detection and activation prior to viral gene expression. Its function is as follows. Provides the signal sequence for the translocation of the precursor of protein E3/E2 to the host endoplasmic reticulum. Furin-cleaved E3 remains associated with spike glycoprotein E1 and mediates pH protection of the latter during the transport via the secretory pathway. After virion release from the host cell, the assembly protein E3 is gradually released in the extracellular space. Functionally, plays a role in viral attachment to target host cell, by binding to the cell receptor MXRA8. The host LDLR may also act as a cell receptor for viral entry. Synthesized as a p62 precursor which is processed by furin at the cell membrane just before virion budding, giving rise to E2-E1 heterodimer. The p62-E1 heterodimer is stable, whereas E2-E1 is unstable and dissociate at low pH. p62 is processed at the last step, presumably to avoid E1 fusion activation before its final export to cell surface. E2 C-terminus contains a transitory transmembrane that would be disrupted by palmitoylation, resulting in reorientation of the C-terminal tail from lumenal to cytoplasmic side. This step is critical since E2 C-terminus is involved in budding by interacting with capsid proteins. This release of E2 C-terminus in cytoplasm occurs lately in protein export, and precludes premature assembly of particles at the endoplasmic reticulum membrane. Acts as a viroporin that participates in virus glycoprotein processing and transport to the plasma membrane, cell permeabilization and budding of viral particles. The cation channel is permeable to Na(+)&gt;K(+)&gt;Ca(2+) in vitro. Disrupts the calcium homeostasis of the cell, probably at the endoplasmic reticulum level. This leads to cytoplasmic calcium elevation. Because of its lipophilic properties, the 6K protein is postulated to influence the selection of lipids that interact with the transmembrane domains of the glycoproteins, which, in turn, affects the deformability of the bilayer required for the extreme curvature that occurs as budding proceeds. Present in low amount in virions, about 3% compared to viral glycoproteins. In terms of biological role, class II viral fusion protein. Fusion activity is inactive as long as E1 is bound to E2 in mature virion. After virus attachment to target cell via host MXRA8 and endocytosis, acidification of the endosome induce dissociation of E1/E2 heterodimer and concomitant trimerization of the E1 subunits. This E1 trimer is fusion active, and promotes release of viral nucleocapsid in cytoplasm after endosome and viral membrane fusion. Efficient fusion requires the presence of cholesterol and sphingolipid in the target membrane. The sequence is that of Structural polyprotein from Ross river virus (strain NB5092) (RRV).